We begin with the raw amino-acid sequence, 186 residues long: Ribosomal RNA small subunit methyltransferase G (186 aa).

S-adenosyl-L-methionine-binding positions include glycine 59, phenylalanine 64, 110–111, and arginine 124; that span reads IE.

The protein belongs to the methyltransferase superfamily. RNA methyltransferase RsmG family.

It is found in the cytoplasm. It catalyses the reaction guanosine(527) in 16S rRNA + S-adenosyl-L-methionine = N(7)-methylguanosine(527) in 16S rRNA + S-adenosyl-L-homocysteine. In terms of biological role, specifically methylates the N7 position of guanine in position 527 of 16S rRNA. This is Ribosomal RNA small subunit methyltransferase G from Campylobacter curvus (strain 525.92).